A 203-amino-acid chain; its full sequence is Large ribosomal subunit protein bL25 (203 aa).

The segment at 182-203 is disordered; that stretch reads EITEEPETEEKKEEGASSVSNS.

Belongs to the bacterial ribosomal protein bL25 family. CTC subfamily. Part of the 50S ribosomal subunit; part of the 5S rRNA/L5/L18/L25 subcomplex. Contacts the 5S rRNA. Binds to the 5S rRNA independently of L5 and L18.

This is one of the proteins that binds to the 5S RNA in the ribosome where it forms part of the central protuberance. In Caldicellulosiruptor saccharolyticus (strain ATCC 43494 / DSM 8903 / Tp8T 6331), this protein is Large ribosomal subunit protein bL25.